A 357-amino-acid chain; its full sequence is Beta-hexosaminidase (357 aa).

Residues Asp66, Arg74, Arg140, and 170–171 contribute to the substrate site; that span reads KH. The active-site Proton donor/acceptor is His183. The active-site Nucleophile is the Asp254.

The protein belongs to the glycosyl hydrolase 3 family. NagZ subfamily.

The protein localises to the cytoplasm. It carries out the reaction Hydrolysis of terminal non-reducing N-acetyl-D-hexosamine residues in N-acetyl-beta-D-hexosaminides.. The protein operates within cell wall biogenesis; peptidoglycan recycling. Plays a role in peptidoglycan recycling by cleaving the terminal beta-1,4-linked N-acetylglucosamine (GlcNAc) from peptide-linked peptidoglycan fragments, giving rise to free GlcNAc, anhydro-N-acetylmuramic acid and anhydro-N-acetylmuramic acid-linked peptides. The sequence is that of Beta-hexosaminidase from Chromobacterium violaceum (strain ATCC 12472 / DSM 30191 / JCM 1249 / CCUG 213 / NBRC 12614 / NCIMB 9131 / NCTC 9757 / MK).